The following is a 61-amino-acid chain: Metallothionein-1D (61 aa).

Residues 1–29 (MDPNCSCSTGGSCSCATSCTCKACRCTSC) form a beta region. Cys-5, Cys-7, Cys-13, Cys-15, Cys-19, Cys-21, Cys-24, Cys-26, Cys-29, Cys-33, Cys-34, Cys-36, Cys-37, Cys-41, Cys-44, Cys-48, Cys-50, Cys-57, Cys-59, and Cys-60 together coordinate a divalent metal cation. The interval 30-61 (KKSCCSCCPAGCAKCAQGCICKGASDKCSCCA) is alpha.

It belongs to the metallothionein superfamily. Type 1 family. In terms of assembly, monomer.

Its function is as follows. Metallothioneins have a high content of cysteine residues that bind various heavy metals; these proteins are transcriptionally regulated by both heavy metals and glucocorticoids. The chain is Metallothionein-1D (MT1D) from Sus scrofa (Pig).